The following is a 130-amino-acid chain: Early E3B 14.5 kDa protein (130 aa).

The first 19 residues, 1–19 (MKRIVTFVLLIFCALPVLC), serve as a signal peptide directing secretion. A helical transmembrane segment spans residues 53-77 (AWLYAIISVMVFCSTIFALAIYPYL).

Belongs to the adenoviridae E3_14 family. Phosphorylated on serine; O-glycosylated, but not N-glycosylated.

Its subcellular location is the host membrane. Down-regulates the EGF receptor and prevents cytolysis by TNF. The sequence is that of Early E3B 14.5 kDa protein from Human adenovirus C serotype 6 (HAdV-6).